A 464-amino-acid polypeptide reads, in one-letter code: MPSELAMNNDELHVVMFPFLAFGHISPFVQLSNKLFSHGVHVTFLSAASNIPRIRSTLNLNPAINVISLKFPNGITNTAELPPHLAGNLIHALDLTQDQVKSLLLELKPHYVFFDFAQHWLPKLASEVGIKSVHFSVYSAISDAYITVPSRFADVEGRNITFEDLKKPPPGYPQNSNISLKAFEAMDFMFLFTRFGEKNLTGYERVLQSLGECSFIVFKTCKEIEGPYLDYIETQFRKPVLLSGPLVPEPSTDVLEEKWSKWLDGFPAKSVILCSFGSETFLSDYQIKELASGLELTGLPFILVLNFPSNLSAKAELERALPKGYLERVKNRGVVHSGWFQQQLVLKHSSVGCYVCHGGFSSVIEAMVNECQLVLLPFKGDQFFNSKLIANDLKAGVEVNRSDEDGFFHKEDILEALKTVMLEDNKEQGKQIRENHMQWSKFLSNKEIQNKFITDLVAQLKSMA.

His24 acts as the Proton acceptor in catalysis. His24 contributes to the an anthocyanidin binding site. Asp115 serves as the catalytic Charge relay. 4 residues coordinate UDP-beta-L-rhamnose: Ser278, His357, Ser362, and Glu365. Gly380 lines the an anthocyanidin pocket.

This sequence belongs to the UDP-glycosyltransferase family. As to expression, expressed in young leaves, flowers, pods and pod shells. Barely detected in seeds, roots and root nodules.

The enzyme catalyses a flavonol 3-O-beta-D-glucoside + UDP-beta-L-rhamnose = a flavonol 3-O-[alpha-L-rhamnosyl-(1-&gt;6)-beta-D-glucoside] + UDP + H(+). Its function is as follows. Flavonol 3-O-glucoside (1-&gt;6) rhamnosyltransferase converting kaempferol 3-O-glucoside to kaempferol 3-O-rutinoside and utilizing 3-O-glucosylated/galactosylated flavonols and UDP-rhamnose as substrates. Prefers kaempferol to quercetin as an aglycon, and 3-O-galactosides to 3-O-glucosides as a glycosylation pattern. In Glycine max (Soybean), this protein is UDP-glycosyltransferase 79A6.